Here is a 257-residue protein sequence, read N- to C-terminus: Probable S-adenosylmethionine-dependent methyltransferase MSMEG_2350/MSMEI_2290 (257 aa).

It belongs to the methyltransferase superfamily.

Probable S-adenosylmethionine-dependent methyltransferase required for the 6-O-methylation of the polysaccharide backbone of 6-O-methylglucosyl lipopolysaccharides (MGLP). This Mycolicibacterium smegmatis (strain ATCC 700084 / mc(2)155) (Mycobacterium smegmatis) protein is Probable S-adenosylmethionine-dependent methyltransferase MSMEG_2350/MSMEI_2290.